A 377-amino-acid chain; its full sequence is NADH dehydrogenase [ubiquinone] 1 alpha subcomplex subunit 9, mitochondrial (377 aa).

The N-terminal 35 residues, 1–35 (MAAAAQSRVVRVLSMSRSAITAIATSVCHGPPCRQ), are a transit peptide targeting the mitochondrion. Residue Lys175 is modified to N6-succinyllysine. N6-acetyllysine is present on residues Lys189 and Lys370.

This sequence belongs to the complex I NDUFA9 subunit family. Complex I is composed of 45 different subunits. This a component of the hydrophobic protein fraction. Interacts with BLOC1S1. Interacts with SLC2A4. Interacts with CLOCK. Interacts with RAB5IF. FAD serves as cofactor. In terms of processing, acetylated on lysine residues. BLOC1S1 is required for acetylation. Acetylated by CLOCK in a circadian manner.

Its subcellular location is the mitochondrion matrix. Functionally, accessory subunit of the mitochondrial membrane respiratory chain NADH dehydrogenase (Complex I), that is believed not to be involved in catalysis. Required for proper complex I assembly. Complex I functions in the transfer of electrons from NADH to the respiratory chain. The immediate electron acceptor for the enzyme is believed to be ubiquinone. This is NADH dehydrogenase [ubiquinone] 1 alpha subcomplex subunit 9, mitochondrial (NDUFA9) from Homo sapiens (Human).